The primary structure comprises 856 residues: Leucine--tRNA ligase (856 aa).

A 'HIGH' region motif is present at residues 53–63 (PYPSGNLHMGH). The 'KMSKS' region motif lies at 622-626 (KMSKS). Lys625 contributes to the ATP binding site.

Belongs to the class-I aminoacyl-tRNA synthetase family.

The protein resides in the cytoplasm. The catalysed reaction is tRNA(Leu) + L-leucine + ATP = L-leucyl-tRNA(Leu) + AMP + diphosphate. The polypeptide is Leucine--tRNA ligase (Prochlorococcus marinus (strain AS9601)).